The following is a 444-amino-acid chain: Xylose isomerase (444 aa).

Residues His101 and Asp104 contribute to the active site. Residues Glu232, Glu268, His271, Asp296, Asp307, Asp309, and Asp339 each coordinate Mg(2+).

It belongs to the xylose isomerase family. In terms of assembly, homotetramer. It depends on Mg(2+) as a cofactor.

The protein localises to the cytoplasm. The enzyme catalyses alpha-D-xylose = alpha-D-xylulofuranose. In Thermotoga petrophila (strain ATCC BAA-488 / DSM 13995 / JCM 10881 / RKU-1), this protein is Xylose isomerase.